Reading from the N-terminus, the 181-residue chain is Endoribonuclease YbeY (181 aa).

Zn(2+) contacts are provided by His140, His144, and His150.

Belongs to the endoribonuclease YbeY family. It depends on Zn(2+) as a cofactor.

Its subcellular location is the cytoplasm. Single strand-specific metallo-endoribonuclease involved in late-stage 70S ribosome quality control and in maturation of the 3' terminus of the 16S rRNA. The sequence is that of Endoribonuclease YbeY from Dinoroseobacter shibae (strain DSM 16493 / NCIMB 14021 / DFL 12).